The sequence spans 451 residues: Serine--tRNA ligase, cytoplasmic (451 aa).

236–238 (TSE) is a binding site for L-serine. ATP-binding positions include 267–269 (RKE) and valine 283. Glutamate 290 provides a ligand contact to L-serine. 354-357 (ELVS) provides a ligand contact to ATP. An L-serine-binding site is contributed by threonine 392.

This sequence belongs to the class-II aminoacyl-tRNA synthetase family. Type-1 seryl-tRNA synthetase subfamily. Homodimer. The tRNA molecule binds across the dimer.

It is found in the cytoplasm. It carries out the reaction tRNA(Ser) + L-serine + ATP = L-seryl-tRNA(Ser) + AMP + diphosphate + H(+). The catalysed reaction is tRNA(Sec) + L-serine + ATP = L-seryl-tRNA(Sec) + AMP + diphosphate + H(+). It functions in the pathway aminoacyl-tRNA biosynthesis; selenocysteinyl-tRNA(Sec) biosynthesis; L-seryl-tRNA(Sec) from L-serine and tRNA(Sec): step 1/1. Its function is as follows. Catalyzes the attachment of serine to tRNA(Ser). Is also able to aminoacylate tRNA(Sec) with serine, to form the misacylated tRNA L-seryl-tRNA(Sec), which will be further converted into selenocysteinyl-tRNA(Sec). This chain is Serine--tRNA ligase, cytoplasmic (serS), found in Dictyostelium discoideum (Social amoeba).